Reading from the N-terminus, the 212-residue chain is Methylthioribulose-1-phosphate dehydratase (212 aa).

Zn(2+) is bound by residues H99 and H101.

The protein belongs to the aldolase class II family. MtnB subfamily. Homotetramer. Zn(2+) serves as cofactor.

It catalyses the reaction 5-(methylsulfanyl)-D-ribulose 1-phosphate = 5-methylsulfanyl-2,3-dioxopentyl phosphate + H2O. It functions in the pathway amino-acid biosynthesis; L-methionine biosynthesis via salvage pathway; L-methionine from S-methyl-5-thio-alpha-D-ribose 1-phosphate: step 2/6. Catalyzes the dehydration of methylthioribulose-1-phosphate (MTRu-1-P) into 2,3-diketo-5-methylthiopentyl-1-phosphate (DK-MTP-1-P). In Bacillus pumilus (strain SAFR-032), this protein is Methylthioribulose-1-phosphate dehydratase.